A 72-amino-acid chain; its full sequence is ATP synthase subunit c (72 aa).

Helical transmembrane passes span Met1–Ile21 and Phe49–Val69.

Belongs to the ATPase C chain family. F-type ATPases have 2 components, F(1) - the catalytic core - and F(0) - the membrane proton channel. F(1) has five subunits: alpha(3), beta(3), gamma(1), delta(1), epsilon(1). F(0) has three main subunits: a(1), b(2) and c(10-14). The alpha and beta chains form an alternating ring which encloses part of the gamma chain. F(1) is attached to F(0) by a central stalk formed by the gamma and epsilon chains, while a peripheral stalk is formed by the delta and b chains.

The protein localises to the cell membrane. F(1)F(0) ATP synthase produces ATP from ADP in the presence of a proton or sodium gradient. F-type ATPases consist of two structural domains, F(1) containing the extramembraneous catalytic core and F(0) containing the membrane proton channel, linked together by a central stalk and a peripheral stalk. During catalysis, ATP synthesis in the catalytic domain of F(1) is coupled via a rotary mechanism of the central stalk subunits to proton translocation. Functionally, key component of the F(0) channel; it plays a direct role in translocation across the membrane. A homomeric c-ring of between 10-14 subunits forms the central stalk rotor element with the F(1) delta and epsilon subunits. The polypeptide is ATP synthase subunit c (Bacillus cytotoxicus (strain DSM 22905 / CIP 110041 / 391-98 / NVH 391-98)).